We begin with the raw amino-acid sequence, 544 residues long: Aspartokinase 2, chloroplastic (544 aa).

The N-terminal 84 residues, 1–84, are a transit peptide targeting the chloroplast; sequence MASLQLYGVK…SSGTGKELTC (84 aa). Positions 87, 90, and 119 each coordinate ATP. Glu-203 is a substrate binding site. 2 ACT domains span residues 401-479 and 481-544; these read IAST…RRSI and SLIG…ETDP.

This sequence belongs to the aspartokinase family. Expressed in stems, leaves, floral organs and young seedlings.

Its subcellular location is the plastid. The protein localises to the chloroplast. It carries out the reaction L-aspartate + ATP = 4-phospho-L-aspartate + ADP. It participates in amino-acid biosynthesis; L-lysine biosynthesis via DAP pathway; (S)-tetrahydrodipicolinate from L-aspartate: step 1/4. Its pathway is amino-acid biosynthesis; L-methionine biosynthesis via de novo pathway; L-homoserine from L-aspartate: step 1/3. It functions in the pathway amino-acid biosynthesis; L-threonine biosynthesis; L-threonine from L-aspartate: step 1/5. Its activity is regulated as follows. Allosterically inhibited by lysine, but not by S-adenosyl-L-methionine (SAM). K(0.5) for lysine in the presence of physiological concentrations of substrates is 12.5 uM. No inhibition by threonine or leucine and no activation or inhibition by alanine, cysteine, isoleucine, serine, valine, methionine, glutamine, asparagine, glutamic acid or arginine. In terms of biological role, involved in the first step of essential amino acids lysine, threonine, methionine and isoleucine synthesis via the aspartate-family pathway. The polypeptide is Aspartokinase 2, chloroplastic (AK2) (Arabidopsis thaliana (Mouse-ear cress)).